Reading from the N-terminus, the 150-residue chain is MSTVPVVQGAGSSNSAQDISTSSVPLTLQGRISNLLSSTAFKVGLVVMGLLLVMATIFLVSAASFVNPIYLAIPAIVGCVNICVGILSMEGYCSPERWSLCKKVLKASEDIIDDGQINNSNKVFTDERLNAIGGVVESLSRRNSLVDQTQ.

Residues 1–20 form a disordered region; the sequence is MSTVPVVQGAGSSNSAQDIS. The next 2 helical transmembrane spans lie at 43-63 and 69-89; these read VGLV…VSAA and IYLA…ILSM.

It localises to the membrane. The polypeptide is Sulfur-rich protein, serovars L1/L3 (srp) (Chlamydia trachomatis).